We begin with the raw amino-acid sequence, 339 residues long: Ferredoxin--NADP reductase (339 aa).

7 residues coordinate FAD: Glu-35, Gln-43, Tyr-48, Val-88, Phe-122, Asp-287, and Ser-327.

This sequence belongs to the ferredoxin--NADP reductase type 2 family. In terms of assembly, homodimer. FAD serves as cofactor.

The enzyme catalyses 2 reduced [2Fe-2S]-[ferredoxin] + NADP(+) + H(+) = 2 oxidized [2Fe-2S]-[ferredoxin] + NADPH. This Leuconostoc citreum (strain KM20) protein is Ferredoxin--NADP reductase.